The following is a 481-amino-acid chain: Velvet complex subunit B (481 aa).

Disordered stretches follow at residues methionine 1–isoleucine 157 and glycine 241–glycine 339. 3 stretches are compositionally biased toward pro residues: residues histidine 36–serine 45, proline 53–proline 62, and proline 96–arginine 112. The region spanning glycine 160 to arginine 464 is the Velvet domain. Low complexity-rich tracts occupy residues glycine 241 to serine 255 and glutamine 293 to proline 325.

This sequence belongs to the velvet family. VelB subfamily. Component of the heterotrimeric velvet complex composed of laeA, veA and velB; VeA acting as a bridging protein between laeA and velB. Forms a heterodimeric complex with vosA; the formation of the velB-vosA complex is light-dependent.

The protein localises to the nucleus. It is found in the cytoplasm. In terms of biological role, component of the velvet transcription factor complex that controls sexual/asexual developmental ratio in response to light, promoting sexual development in the darkness while stimulating asexual sporulation under illumination. The velvet complex acts as a global regulator for secondary metabolite gene expression. Component of the velB-VosA heterodimeric complex that plays a dual role in activating genes associated with spore maturation and repressing certain development-associated genes. The velB-VosA complex binds DNA through the DNA-binding domain of vosA that recognizes an 11-nucleotide consensus sequence 5'-CTGGCCGCGGC-3' consisting of two motifs in the promoters of key developmental regulatory genes. Controls the biosynthetic gene cluster for beauvericin, a depsipeptide mycotoxin that functions as a virulence determinant. Also regulates chromatin structure and transcription of siderophore biosynthetic genes and is required for infection of tomato plants. This Fusarium oxysporum f. sp. lycopersici (strain 4287 / CBS 123668 / FGSC 9935 / NRRL 34936) (Fusarium vascular wilt of tomato) protein is Velvet complex subunit B.